A 221-amino-acid chain; its full sequence is Tetraspanin-2 (221 aa).

Residues 1 to 13 (MGRFRGGLRCIKY) lie on the Cytoplasmic side of the membrane. A helical membrane pass occupies residues 14–34 (LLLGFNLLFWLAGSAVIAFGL). Topologically, residues 35-54 (WFRFGGTIKDLSSEEKSPEY) are extracellular. Residues 55–75 (FYVGLYVLVGAGALMMAVGFF) traverse the membrane as a helical segment. The Cytoplasmic portion of the chain corresponds to 76-90 (GCCGAMRESQCVLGS). The helical transmembrane segment at 91–111 (FFTCLLVIFAAEVTTGVFAFI) threads the bilayer. Residues 112–188 (GKDVAIRHVQ…ETIISVKLQL (77 aa)) lie on the Extracellular side of the membrane. Asn139 carries an N-linked (GlcNAc...) asparagine glycan. Residues 189-209 (IGIVGIGIAGLTIFGMIFSMV) form a helical membrane-spanning segment. Over 210–221 (LCCAIRNSRDVI) the chain is Cytoplasmic.

It belongs to the tetraspanin (TM4SF) family. As to expression, expression is restricted to the nervous system.

It is found in the membrane. Functionally, may play a role in signalling in oligodendrocytes in the early stages of their terminal differentiation into myelin-forming glia and may also function in stabilizing the mature sheath. This Rattus norvegicus (Rat) protein is Tetraspanin-2 (Tspan2).